The chain runs to 331 residues: Probable allantoicase (331 aa).

This sequence belongs to the allantoicase family.

It carries out the reaction allantoate + H2O = (S)-ureidoglycolate + urea. Its pathway is nitrogen metabolism; (S)-allantoin degradation; (S)-ureidoglycolate from allantoate (aminidohydrolase route): step 1/1. The protein is Probable allantoicase of Stutzerimonas stutzeri (strain A1501) (Pseudomonas stutzeri).